A 202-amino-acid polypeptide reads, in one-letter code: Small ribosomal subunit protein uS4c (202 aa).

The S4 RNA-binding domain maps to 90 to 153 (MRLDNVTFRL…KSETIISKNI (64 aa)).

This sequence belongs to the universal ribosomal protein uS4 family. Part of the 30S ribosomal subunit. Contacts protein S5. The interaction surface between S4 and S5 is involved in control of translational fidelity.

It is found in the plastid. The protein localises to the chloroplast. Functionally, one of the primary rRNA binding proteins, it binds directly to 16S rRNA where it nucleates assembly of the body of the 30S subunit. Its function is as follows. With S5 and S12 plays an important role in translational accuracy. In Hypnum cupressiforme (Cypress-leaved plait-moss), this protein is Small ribosomal subunit protein uS4c (rps4).